The sequence spans 351 residues: Prostaglandin reductase 2 (351 aa).

99-100 provides a ligand contact to substrate; the sequence is FY. NADP(+) contacts are provided by residues 165–168, K192, Y208, N231, 253–259, 287–289, and N337; these read GACG, CGQISQY, and FLV. A substrate-binding site is contributed by 288 to 290; sequence LVL.

The protein belongs to the NADP-dependent oxidoreductase L4BD family. Monomer. As to expression, widely expressed.

Its subcellular location is the cytoplasm. The enzyme catalyses 13,14-dihydro-15-oxo-prostaglandin E2 + NAD(+) = 15-oxoprostaglandin E2 + NADH + H(+). The catalysed reaction is 13,14-dihydro-15-oxo-prostaglandin E2 + NADP(+) = 15-oxoprostaglandin E2 + NADPH + H(+). It catalyses the reaction 13,14-dihydro-15-oxo-PGF2alpha + NADP(+) = 15-oxoprostaglandin F2alpha + NADPH + H(+). It carries out the reaction 13,14-dihydro-15-oxo-prostaglandin E1 + NADP(+) = 15-oxoprostaglandin E1 + NADPH + H(+). The enzyme catalyses 13,14-dihydro-15-oxo-prostaglandin F1alpha + NADP(+) = 15-oxoprostaglandin F1alpha + NADPH + H(+). In terms of biological role, functions as 15-oxo-prostaglandin 13-reductase and acts on 15-keto-PGE1, 15-keto-PGE2, 15-keto-PGE1-alpha and 15-keto-PGE2-alpha with highest activity towards 15-keto-PGE2. Overexpression represses transcriptional activity of PPARG and inhibits adipocyte differentiation. The chain is Prostaglandin reductase 2 from Homo sapiens (Human).